The primary structure comprises 555 residues: Glucose-6-phosphate isomerase (555 aa).

Catalysis depends on E360, which acts as the Proton donor. Catalysis depends on residues H391 and K519.

It belongs to the GPI family.

Its subcellular location is the cytoplasm. It catalyses the reaction alpha-D-glucose 6-phosphate = beta-D-fructose 6-phosphate. The protein operates within carbohydrate biosynthesis; gluconeogenesis. It functions in the pathway carbohydrate degradation; glycolysis; D-glyceraldehyde 3-phosphate and glycerone phosphate from D-glucose: step 2/4. Its function is as follows. Catalyzes the reversible isomerization of glucose-6-phosphate to fructose-6-phosphate. The protein is Glucose-6-phosphate isomerase of Acinetobacter baumannii (strain AB307-0294).